We begin with the raw amino-acid sequence, 205 residues long: Meiotic nuclear division protein 1 homolog (205 aa).

The residue at position 2 (Ser2) is an N-acetylserine. A coiled-coil region spans residues 83–173; that stretch reads KRKLEALNSQ…EAANRWTDNI (91 aa).

Belongs to the MND1 family. Heterodimer with PSMC3IP/HOP2. MND1-PSMC3IP interacts with DMC1 and RAD51 and binds to ssDNA and dsDNA showing no preference for either form of DNA.

It localises to the nucleus. Functionally, required for proper homologous chromosome pairing and efficient cross-over and intragenic recombination during meiosis. Stimulates both DMC1- and RAD51-mediated homologous strand assimilation, which is required for the resolution of meiotic double-strand breaks. The chain is Meiotic nuclear division protein 1 homolog from Mus musculus (Mouse).